The primary structure comprises 266 residues: 3-methyl-2-oxobutanoate hydroxymethyltransferase 2 (266 aa).

Mg(2+) is bound by residues Asp45 and Asp84. Residues 45–46 (DS), Asp84, and Lys112 contribute to the 3-methyl-2-oxobutanoate site. Position 114 (Glu114) interacts with Mg(2+). Glu181 functions as the Proton acceptor in the catalytic mechanism.

This sequence belongs to the PanB family. As to quaternary structure, homodecamer; pentamer of dimers. The cofactor is Mg(2+).

Its subcellular location is the cytoplasm. It carries out the reaction 3-methyl-2-oxobutanoate + (6R)-5,10-methylene-5,6,7,8-tetrahydrofolate + H2O = 2-dehydropantoate + (6S)-5,6,7,8-tetrahydrofolate. It participates in cofactor biosynthesis; (R)-pantothenate biosynthesis; (R)-pantoate from 3-methyl-2-oxobutanoate: step 1/2. Catalyzes the reversible reaction in which hydroxymethyl group from 5,10-methylenetetrahydrofolate is transferred onto alpha-ketoisovalerate to form ketopantoate. In Pseudomonas aeruginosa (strain UCBPP-PA14), this protein is 3-methyl-2-oxobutanoate hydroxymethyltransferase 2.